Here is a 401-residue protein sequence, read N- to C-terminus: Nodal homolog 3-A (401 aa).

Residues 1–18 form the signal peptide; the sequence is MAFLNLFFCLVFISPLMA. The propeptide occupies 19–274; it reads MPPVLQGRKS…KVNGFRRLRR (256 aa). Residues N168, N337, N341, and N344 are each glycosylated (N-linked (GlcNAc...) asparagine). Cystine bridges form between C299–C365 and C328–C396.

This sequence belongs to the TGF-beta family. Monomer. The propeptide region interacts with bmp4 in a non-covalent manner. Expressed in the epithelial layer of the Spemann organizer during gastrulation.

It is found in the secreted. In terms of biological role, exhibits mesoderm-dorsalizing activity and neural-inducing activity, but lacks mesoderm-inducing activity. Regulates the expression of specific mesodermal and neural genes. Induces convergent extension movements at the embryonic midline by activating the fgf signaling pathway to induce t/bra expression in the organizer region. Acts with wnt11 to induce Spemann organizer cells and induce axis formation. The unprocessed protein antagonizes bmp-signaling. The sequence is that of Nodal homolog 3-A (nodal3-a) from Xenopus laevis (African clawed frog).